A 246-amino-acid chain; its full sequence is MTNNAAAPLYSLRGLPLIGWRDMSHALNYLFADGQLKQGTLVAINAEKLLTAEDNPEVRALIGAAEFKYADGISVVRSIRKKFPQAQVSRVAGADLWEALMARAGKEGTPVFLVGGKPEVLAQTEAKLRTQWNVNIVGSQDGYFTPEQRQALFARIHASGAKIVTVAMGSPKQELLMRDCREVHPHALYMGVGGTYDVFTGHVKRAPKIWQNLGLEWLYRLLSQPKRITRQMRLLRYLRWHYTGDL.

Belongs to the glycosyltransferase 26 family.

It carries out the reaction UDP-N-acetyl-alpha-D-mannosaminouronate + N-acetyl-alpha-D-glucosaminyl-di-trans,octa-cis-undecaprenyl diphosphate = beta-D-ManNAcA-(1-&gt;4)-alpha-D-GlcNAc-di-trans,octa-cis-undecaprenyl diphosphate + UDP + H(+). Its pathway is bacterial outer membrane biogenesis; enterobacterial common antigen biosynthesis. In terms of biological role, catalyzes the synthesis of Und-PP-GlcNAc-ManNAcA (Lipid II), the second lipid-linked intermediate involved in enterobacterial common antigen (ECA) synthesis. The sequence is that of UDP-N-acetyl-D-mannosaminuronic acid transferase from Salmonella paratyphi A (strain ATCC 9150 / SARB42).